The sequence spans 605 residues: DNA mismatch repair protein MutL (605 aa).

This sequence belongs to the DNA mismatch repair MutL/HexB family.

This protein is involved in the repair of mismatches in DNA. It is required for dam-dependent methyl-directed DNA mismatch repair. May act as a 'molecular matchmaker', a protein that promotes the formation of a stable complex between two or more DNA-binding proteins in an ATP-dependent manner without itself being part of a final effector complex. The sequence is that of DNA mismatch repair protein MutL from Exiguobacterium sp. (strain ATCC BAA-1283 / AT1b).